The following is a 158-amino-acid chain: MDSLNLNVINDDEHPIPNQDLLEKCFALVADKHNISQAEVNVSIVSNQEIQQINKQFRHKDKPTNIISFEFEKPEGLPEDIAANFWGDIVIAPEVLKKEAKEQNKNLDDHWQHIFIHGLLHLLGYDHIDDIEAEEMENLEIELLAELGIANPYIEQEN.

H117, H121, and H127 together coordinate Zn(2+).

This sequence belongs to the endoribonuclease YbeY family. Requires Zn(2+) as cofactor.

It localises to the cytoplasm. In terms of biological role, single strand-specific metallo-endoribonuclease involved in late-stage 70S ribosome quality control and in maturation of the 3' terminus of the 16S rRNA. The polypeptide is Endoribonuclease YbeY (Francisella philomiragia subsp. philomiragia (strain ATCC 25017 / CCUG 19701 / FSC 153 / O#319-036)).